The chain runs to 338 residues: CRISPR-associated endonuclease Cas1 (338 aa).

3 residues coordinate Mn(2+): E165, H230, and E245.

Belongs to the CRISPR-associated endonuclease Cas1 family. In terms of assembly, homodimer, forms a heterotetramer with a Cas2 homodimer. It depends on Mg(2+) as a cofactor. The cofactor is Mn(2+).

Its function is as follows. CRISPR (clustered regularly interspaced short palindromic repeat), is an adaptive immune system that provides protection against mobile genetic elements (viruses, transposable elements and conjugative plasmids). CRISPR clusters contain spacers, sequences complementary to antecedent mobile elements, and target invading nucleic acids. CRISPR clusters are transcribed and processed into CRISPR RNA (crRNA). Acts as a dsDNA endonuclease. Involved in the integration of spacer DNA into the CRISPR cassette. This Fusobacterium nucleatum subsp. nucleatum (strain ATCC 25586 / DSM 15643 / BCRC 10681 / CIP 101130 / JCM 8532 / KCTC 2640 / LMG 13131 / VPI 4355) protein is CRISPR-associated endonuclease Cas1.